The sequence spans 733 residues: EF-hand domain-containing family member C2 (733 aa).

3 consecutive DM10 domains span residues 61-168 (DKQV…TKIG), 212-354 (DRKV…RTKY), and 416-523 (ISNT…ERNS).

Microtubule inner protein component of sperm flagellar doublet microtubules. In terms of tissue distribution, expressed in trachea multiciliated cells.

The protein resides in the cytoplasm. It is found in the cytoskeleton. It localises to the cilium axoneme. Its subcellular location is the flagellum axoneme. Microtubule inner protein (MIP) part of the dynein-decorated doublet microtubules (DMTs) in cilia axoneme, which is required for motile cilia beating. This Bos taurus (Bovine) protein is EF-hand domain-containing family member C2 (EFHC2).